Consider the following 592-residue polypeptide: Aspartate--tRNA(Asp/Asn) ligase (592 aa).

An L-aspartate-binding site is contributed by E175. An aspartate region spans residues 199-202 (QLFK). R221 serves as a coordination point for L-aspartate. Residues 221-223 (RDE) and Q230 contribute to the ATP site. H450 provides a ligand contact to L-aspartate. E483 serves as a coordination point for ATP. R490 contributes to the L-aspartate binding site. 535–538 (GLDR) provides a ligand contact to ATP.

Belongs to the class-II aminoacyl-tRNA synthetase family. Type 1 subfamily. As to quaternary structure, homodimer.

The protein localises to the cytoplasm. It carries out the reaction tRNA(Asx) + L-aspartate + ATP = L-aspartyl-tRNA(Asx) + AMP + diphosphate. Its function is as follows. Aspartyl-tRNA synthetase with relaxed tRNA specificity since it is able to aspartylate not only its cognate tRNA(Asp) but also tRNA(Asn). Reaction proceeds in two steps: L-aspartate is first activated by ATP to form Asp-AMP and then transferred to the acceptor end of tRNA(Asp/Asn). The protein is Aspartate--tRNA(Asp/Asn) ligase of Acinetobacter baumannii (strain ATCC 17978 / DSM 105126 / CIP 53.77 / LMG 1025 / NCDC KC755 / 5377).